A 439-amino-acid chain; its full sequence is ATP-dependent RNA helicase RhlB (439 aa).

Positions 9 to 37 (QKFADLPLHPEVKQALAENGFEFCTPIQA) match the Q motif motif. The Helicase ATP-binding domain occupies 40 to 219 (LPVLLQSKDI…YDHMNDPVKV (180 aa)). Position 53-60 (53-60 (AQTGTGKT)) interacts with ATP. The DEAD box motif lies at 165–168 (DEAD). The 148-residue stretch at 243–390 (KIRLLLTLIE…VSNYDRDALL (148 aa)) folds into the Helicase C-terminal domain. Residues 395 to 439 (PPVKIHRKHPAGARNLRERSGAGRPQGAHRSGGRPPRHDRTRRQP) form a disordered region. The segment covering 425-439 (SGGRPPRHDRTRRQP) has biased composition (basic residues).

This sequence belongs to the DEAD box helicase family. RhlB subfamily. As to quaternary structure, component of the RNA degradosome, which is a multiprotein complex involved in RNA processing and mRNA degradation.

Its subcellular location is the cytoplasm. The catalysed reaction is ATP + H2O = ADP + phosphate + H(+). Functionally, DEAD-box RNA helicase involved in RNA degradation. Has RNA-dependent ATPase activity and unwinds double-stranded RNA. The protein is ATP-dependent RNA helicase RhlB of Shewanella sp. (strain MR-4).